Here is a 262-residue protein sequence, read N- to C-terminus: Putative ankyrin repeat protein FPV243 (262 aa).

Residues 25–54 form an ANK repeat; the sequence is YGSTPLFEAICNCSCKNVKLFLENNADINE.

In Vertebrata (FPV), this protein is Putative ankyrin repeat protein FPV243.